Reading from the N-terminus, the 131-residue chain is Small ribosomal subunit protein uS9 (131 aa).

It belongs to the universal ribosomal protein uS9 family.

This Actinobacillus pleuropneumoniae serotype 5b (strain L20) protein is Small ribosomal subunit protein uS9.